The chain runs to 474 residues: tRNA-2-methylthio-N(6)-dimethylallyladenosine synthase (474 aa).

Residues 3–120 (KKLHIKTWGC…LPEMINSVRG (118 aa)) enclose the MTTase N-terminal domain. 6 residues coordinate [4Fe-4S] cluster: cysteine 12, cysteine 49, cysteine 83, cysteine 157, cysteine 161, and cysteine 164. Residues 143 to 375 (RAEGPTAFVS…QERINQQAMA (233 aa)) enclose the Radical SAM core domain. One can recognise a TRAM domain in the interval 378-441 (RRMLGSTQRI…PNSLRGKVVR (64 aa)).

This sequence belongs to the methylthiotransferase family. MiaB subfamily. As to quaternary structure, monomer. [4Fe-4S] cluster serves as cofactor.

The protein resides in the cytoplasm. It catalyses the reaction N(6)-dimethylallyladenosine(37) in tRNA + (sulfur carrier)-SH + AH2 + 2 S-adenosyl-L-methionine = 2-methylsulfanyl-N(6)-dimethylallyladenosine(37) in tRNA + (sulfur carrier)-H + 5'-deoxyadenosine + L-methionine + A + S-adenosyl-L-homocysteine + 2 H(+). Catalyzes the methylthiolation of N6-(dimethylallyl)adenosine (i(6)A), leading to the formation of 2-methylthio-N6-(dimethylallyl)adenosine (ms(2)i(6)A) at position 37 in tRNAs that read codons beginning with uridine. This chain is tRNA-2-methylthio-N(6)-dimethylallyladenosine synthase, found in Salmonella arizonae (strain ATCC BAA-731 / CDC346-86 / RSK2980).